The following is a 261-amino-acid chain: Proteasome subunit alpha type-4 (261 aa).

Residues serine 13 and serine 75 each carry the phosphoserine modification. Position 127 is an N6-acetyllysine (lysine 127). Serine 173 bears the Phosphoserine mark. Lysine 176 bears the N6-acetyllysine mark. Positions 240–261 (HEEEEAKAEREKKEKEQKEKDK) are disordered.

This sequence belongs to the peptidase T1A family. In terms of assembly, the 26S proteasome consists of a 20S proteasome core and two 19S regulatory subunits. The 20S proteasome core is a barrel-shaped complex made of 28 subunits that are arranged in four stacked rings. The two outer rings are each formed by seven alpha subunits, and the two inner rings are formed by seven beta subunits. The proteolytic activity is exerted by three beta-subunits PSMB5, PSMB6 and PSMB7.

It localises to the cytoplasm. Its subcellular location is the nucleus. Component of the 20S core proteasome complex involved in the proteolytic degradation of most intracellular proteins. This complex plays numerous essential roles within the cell by associating with different regulatory particles. Associated with two 19S regulatory particles, forms the 26S proteasome and thus participates in the ATP-dependent degradation of ubiquitinated proteins. The 26S proteasome plays a key role in the maintenance of protein homeostasis by removing misfolded or damaged proteins that could impair cellular functions, and by removing proteins whose functions are no longer required. Associated with the PA200 or PA28, the 20S proteasome mediates ubiquitin-independent protein degradation. This type of proteolysis is required in several pathways including spermatogenesis (20S-PA200 complex) or generation of a subset of MHC class I-presented antigenic peptides (20S-PA28 complex). This chain is Proteasome subunit alpha type-4 (PSMA4), found in Macaca fascicularis (Crab-eating macaque).